Here is a 363-residue protein sequence, read N- to C-terminus: Peptide chain release factor 2 (363 aa).

An N5-methylglutamine modification is found at Gln-251.

The protein belongs to the prokaryotic/mitochondrial release factor family. Post-translationally, methylated by PrmC. Methylation increases the termination efficiency of RF2.

The protein localises to the cytoplasm. In terms of biological role, peptide chain release factor 2 directs the termination of translation in response to the peptide chain termination codons UGA and UAA. This is Peptide chain release factor 2 from Helicobacter pylori (strain P12).